The primary structure comprises 424 residues: Riboflavin biosynthesis protein RibBA (424 aa).

The tract at residues 1–206 (MVTCEAGIAS…VDDLITYRWT (206 aa)) is DHBP synthase. D-ribulose 5-phosphate contacts are provided by residues 32–33 (RE), aspartate 37, 145–149 (RPGHT), and glutamate 169. Glutamate 33 serves as a coordination point for Mg(2+). Residue histidine 148 participates in Mg(2+) binding. The interval 207 to 424 (FDSLVEHVSS…YETVERTSCC (218 aa)) is GTP cyclohydrolase II. 257–261 (RVHSE) is a GTP binding site. The Zn(2+) site is built by cysteine 262, cysteine 273, and cysteine 275. Residues glutamine 278, 301–303 (EGR), and threonine 323 each bind GTP. The active-site Proton acceptor; for GTP cyclohydrolase activity is aspartate 335. Catalysis depends on arginine 337, which acts as the Nucleophile; for GTP cyclohydrolase activity. The GTP site is built by threonine 358 and lysine 363.

It in the N-terminal section; belongs to the DHBP synthase family. The protein in the C-terminal section; belongs to the GTP cyclohydrolase II family. Mg(2+) is required as a cofactor. Mn(2+) serves as cofactor. The cofactor is Zn(2+).

It carries out the reaction D-ribulose 5-phosphate = (2S)-2-hydroxy-3-oxobutyl phosphate + formate + H(+). The enzyme catalyses GTP + 4 H2O = 2,5-diamino-6-hydroxy-4-(5-phosphoribosylamino)-pyrimidine + formate + 2 phosphate + 3 H(+). The protein operates within cofactor biosynthesis; riboflavin biosynthesis; 2-hydroxy-3-oxobutyl phosphate from D-ribulose 5-phosphate: step 1/1. It functions in the pathway cofactor biosynthesis; riboflavin biosynthesis; 5-amino-6-(D-ribitylamino)uracil from GTP: step 1/4. In terms of biological role, catalyzes the conversion of D-ribulose 5-phosphate to formate and 3,4-dihydroxy-2-butanone 4-phosphate. Its function is as follows. Catalyzes the conversion of GTP to 2,5-diamino-6-ribosylamino-4(3H)-pyrimidinone 5'-phosphate (DARP), formate and pyrophosphate. The polypeptide is Riboflavin biosynthesis protein RibBA (Chlamydia muridarum (strain MoPn / Nigg)).